The following is a 257-amino-acid chain: MVKSHIGGWILVLFVAAWSDIGLCKKRPKPGGGWNTGGSRYPGQGSPGGNRYPPQGGGGWGQPHGGGWGQPHGGGWGQPHGGGWGQPHGGGGWGQGGGSHGQWNKPSKPKTNMKHVAGAAAAGAVVGGLGGYMLGSAMSRPLIHFGSDYEDRYYRENMYRYPNQVYYRPVDQYSNQNSFVHDCVNITVKQHTVTTTTKGENFTETDVKMIERVVEQMCITQYQKEYEAYAQRGASVILFSSPPVILLISFLLFLIVG.

A signal peptide spans 1–24 (MVKSHIGGWILVLFVAAWSDIGLC). Residues 25–234 (KKRPKPGGGW…EYEAYAQRGA (210 aa)) are interaction with GRB2, ERI3 and SYN1. The interval 28 to 113 (PKPGGGWNTG…NKPSKPKTNM (86 aa)) is disordered. Tandem repeats lie at residues 54-62 (PQGGGGWGQ), 63-70 (PHGGGWGQ), 71-78 (PHGGGWGQ), 79-86 (PHGGGWGQ), and 87-95 (PHGGGGWGQ). The tract at residues 54 to 95 (PQGGGGWGQPHGGGWGQPHGGGWGQPHGGGWGQPHGGGGWGQ) is 5 X 8 AA tandem repeats of P-H-G-G-G-W-G-Q. A compositionally biased stretch (gly residues) spans 55–100 (QGGGGWGQPHGGGWGQPHGGGWGQPHGGGWGQPHGGGGWGQGGGSH). Positions 64, 65, 66, 72, 73, 74, 80, 81, 82, 88, 90, and 91 each coordinate Cu(2+). A disulfide bridge links cysteine 183 with cysteine 218. N-linked (GlcNAc...) asparagine glycosylation is found at asparagine 185 and asparagine 201. A lipid anchor (GPI-anchor amidated alanine) is attached at alanine 234. The propeptide at 235 to 257 (SVILFSSPPVILLISFLLFLIVG) is removed in mature form.

It belongs to the prion family. Monomer and homodimer. Has a tendency to aggregate into amyloid fibrils containing a cross-beta spine, formed by a steric zipper of superposed beta-strands. Soluble oligomers may represent an intermediate stage on the path to fibril formation. Copper binding may promote oligomerization. Interacts with GRB2, APP, ERI3/PRNPIP and SYN1. Mislocalized cytosolically exposed PrP interacts with MGRN1; this interaction alters MGRN1 subcellular location and causes lysosomal enlargement. Interacts with KIAA1191.

Its subcellular location is the cell membrane. The protein localises to the golgi apparatus. Its function is as follows. Its primary physiological function is unclear. Has cytoprotective activity against internal or environmental stresses. May play a role in neuronal development and synaptic plasticity. May be required for neuronal myelin sheath maintenance. May play a role in iron uptake and iron homeostasis. Soluble oligomers are toxic to cultured neuroblastoma cells and induce apoptosis (in vitro). Association with GPC1 (via its heparan sulfate chains) targets PRNP to lipid rafts. Also provides Cu(2+) or Zn(2+) for the ascorbate-mediated GPC1 deaminase degradation of its heparan sulfate side chains. The chain is Major prion protein (PRNP) from Sus scrofa (Pig).